We begin with the raw amino-acid sequence, 1818 residues long: U3 small nucleolar RNA-associated protein 10 (1818 aa).

A helical transmembrane segment spans residues 568–588; sequence TDFYLLIPLILLALFDNSKLI. Residues 1778–1816 form an HEAT repeat; it reads LVPYIAELLEDDDEEVEMEVRRGLVRVIENVLGEPLDRY.

Belongs to the HEATR1/UTP10 family. Component of the ribosomal small subunit (SSU) processome.

It is found in the nucleus. The protein resides in the nucleolus. The protein localises to the membrane. Functionally, involved in nucleolar processing of pre-18S ribosomal RNA. Involved in ribosome biosynthesis. The protein is U3 small nucleolar RNA-associated protein 10 of Candida albicans (strain SC5314 / ATCC MYA-2876) (Yeast).